Consider the following 499-residue polypeptide: Cytochrome P450 71A27 (499 aa).

Residues 3 to 23 (MILISLCLTTLLAFLFLKPLL) form a helical membrane-spanning segment. Heme is bound at residue C438.

This sequence belongs to the cytochrome P450 family. It depends on heme as a cofactor.

The protein localises to the membrane. The chain is Cytochrome P450 71A27 (CYP71A27) from Arabidopsis thaliana (Mouse-ear cress).